We begin with the raw amino-acid sequence, 345 residues long: Achaete-scute complex protein T4 (345 aa).

A compositionally biased stretch (low complexity) spans 78–92 (SESVSSLSPGSSPAP). Residues 78 to 109 (SESVSSLSPGSSPAPYNVDQSQSVQRRNARER) form a disordered region. The bHLH domain occupies 99 to 162 (QSVQRRNARE…RIAVEYIRRL (64 aa)).

As to quaternary structure, efficient DNA binding requires dimerization with another bHLH protein. Interacts with da (via bHLH motif). Interacts with Bap60. L(1)SC, SC and AC strongly label the presumptive stomatogastric nervous system, while ASE is more prominent in the presumptive procephalic lobe. Associates with the somatic nuclei through nuclear cycles 9 and 10. During nuclear cycle 11 distributes uniformly in the embryo.

Its function is as follows. AS-C proteins are involved in the determination of the neuronal precursors in the peripheral nervous system and the central nervous system. Also involved in sex determination and dosage compensation. This Drosophila melanogaster (Fruit fly) protein is Achaete-scute complex protein T4 (sc).